The primary structure comprises 236 residues: tRNA1(Val) (adenine(37)-N6)-methyltransferase (236 aa).

The protein belongs to the methyltransferase superfamily. tRNA (adenine-N(6)-)-methyltransferase family.

It localises to the cytoplasm. It carries out the reaction adenosine(37) in tRNA1(Val) + S-adenosyl-L-methionine = N(6)-methyladenosine(37) in tRNA1(Val) + S-adenosyl-L-homocysteine + H(+). In terms of biological role, specifically methylates the adenine in position 37 of tRNA(1)(Val) (anticodon cmo5UAC). The sequence is that of tRNA1(Val) (adenine(37)-N6)-methyltransferase from Aeromonas hydrophila subsp. hydrophila (strain ATCC 7966 / DSM 30187 / BCRC 13018 / CCUG 14551 / JCM 1027 / KCTC 2358 / NCIMB 9240 / NCTC 8049).